Consider the following 69-residue polypeptide: Large ribosomal subunit protein uL30 (69 aa).

The protein belongs to the universal ribosomal protein uL30 family. Part of the 50S ribosomal subunit.

This chain is Large ribosomal subunit protein uL30, found in Rhizobium etli (strain ATCC 51251 / DSM 11541 / JCM 21823 / NBRC 15573 / CFN 42).